A 336-amino-acid polypeptide reads, in one-letter code: Ketol-acid reductoisomerase (NADP(+)) 1 (336 aa).

Residues A2–T181 enclose the KARI N-terminal Rossmann domain. Residues Y25–Q28, R48, S52, and D82–Q85 each bind NADP(+). H107 is a catalytic residue. An NADP(+)-binding site is contributed by G133. The 146-residue stretch at T182–V327 folds into the KARI C-terminal knotted domain. Mg(2+)-binding residues include D190, E194, E226, and E230. Position 251 (S251) interacts with substrate.

The protein belongs to the ketol-acid reductoisomerase family. Mg(2+) serves as cofactor.

The enzyme catalyses (2R)-2,3-dihydroxy-3-methylbutanoate + NADP(+) = (2S)-2-acetolactate + NADPH + H(+). The catalysed reaction is (2R,3R)-2,3-dihydroxy-3-methylpentanoate + NADP(+) = (S)-2-ethyl-2-hydroxy-3-oxobutanoate + NADPH + H(+). The protein operates within amino-acid biosynthesis; L-isoleucine biosynthesis; L-isoleucine from 2-oxobutanoate: step 2/4. Its pathway is amino-acid biosynthesis; L-valine biosynthesis; L-valine from pyruvate: step 2/4. Involved in the biosynthesis of branched-chain amino acids (BCAA). Catalyzes an alkyl-migration followed by a ketol-acid reduction of (S)-2-acetolactate (S2AL) to yield (R)-2,3-dihydroxy-isovalerate. In the isomerase reaction, S2AL is rearranged via a Mg-dependent methyl migration to produce 3-hydroxy-3-methyl-2-ketobutyrate (HMKB). In the reductase reaction, this 2-ketoacid undergoes a metal-dependent reduction by NADPH to yield (R)-2,3-dihydroxy-isovalerate. The polypeptide is Ketol-acid reductoisomerase (NADP(+)) 1 (Bacillus cereus (strain ZK / E33L)).